Here is a 386-residue protein sequence, read N- to C-terminus: CRISPR system endoribonuclease Csm6' (386 aa).

Residues 1 to 146 (MRVLISAVGD…ASNENIGHDN (146 aa)) are CARF domain. Residues 147 to 386 (DENIDELIEV…LNKILLTKLN (240 aa)) form an HEPN domain region.

It belongs to the CRISPR-associated Csm6 family. In terms of assembly, homodimer. The composite ssRNase active site is formed at the dimer interface.

With respect to regulation, non-specific ssRNase activity is stimulated about 1000-fold by cyclic oligoadenylate (cOA), a second messenger produced by Cas10 of the ternary Csm effector complex in the presence of a cognate target RNA. CRISPR (clustered regularly interspaced short palindromic repeat) is an adaptive immune system that provides protection against mobile genetic elements (viruses, transposable elements and conjugative plasmids). CRISPR clusters contain spacers, sequences complementary to antecedent mobile elements, and target invading nucleic acids. CRISPR clusters are transcribed and processed into CRISPR RNA (crRNA). The type III-A Csm complex binds crRNA and acts as a crRNA-guided RNase, DNase and cyclic oligoadenylate synthase; binding of target RNA cognate to the crRNA is required for all activities. In a heterologous host this Csm effector complex restricts ssRNA phage MS2, suggesting it may target RNA viruses in vivo. This protein is not part of the Csm complex. Functionally, csm functions as a non-specific ssDNase. Base-pairing between crRNA and target RNA to form a ternary Csm complex activates a ssDNase activity; target RNA cleavage suppresses the ssDNase, a temporal control that prevents uncontrolled DNA degradation. Viral RNA transcripts probably tether the Csm complex to the viral genome, recruiting Cas10 ssDNA activity which is able to degrade DNA in the transcription bubble, spatially controlling the DNase activity. In terms of biological role, a single-strand-specific endoribonuclease (ssRNase) that is approximately 1000-fold stimulated by cyclic oligoadenylate (cOA); although several species of cOA are synthesized by this organism only cyclic hexaadenylate (cA6) stimulates the ssRNase activity. Cleaves preferentially within GA or AA dinucleotides, although the presence of cA6 broadens the preference. The protein is CRISPR system endoribonuclease Csm6' of Streptococcus thermophilus.